We begin with the raw amino-acid sequence, 525 residues long: MYGLEKLGINNVTAAHYNLSPAQLVEKALANNEGILSDTGAFVISTGKYTGRAPDDKFFVDTPEVHKYIDWSRNQPIEKEKFDAIFGKLVAYLQNREIFIFDGRAGANPEYTRRFRVINELASQNLFIHQLLIRTDEEYNENNDIDFTIISAPNFHCVPEIDGVNSEAAIIINFEKKIAIICATKYSGEIKKSVFSIMNYIMPHENILPMHCSANMDPVTHETAIFFGLSGTGKTTLSADPNRKLIGDDEHGWCDKGIFNFEGGCYAKCINLKEESEPEIYRAIKFGSLVENVVVDPITRKIQYEDASITPNTRVGYPIDYIPNAELSGVGGIPKVVIFLTADSFGVLPPISRLSQEAAMYHFVTGFTAKLAGTELGVKEPVPTFSTCFGEPFMPMDPSVYAEMLGERLKKHNTKVYLINTGWSGGAYGTGKRINLKYTRAMVTAVLNGYFDNAEYKHDDIFNLDIPQSCPGVPSEIMNPIDTWQDRDKYIIAAKKLANLFYNNFKEKYPNMPENITNAGPKYND.

Substrate contacts are provided by R52, Y186, and K192. ATP is bound by residues K192, H211, and 228 to 236 (GLSGTGKTT). Mn(2+) contacts are provided by K192 and H211. D249 contacts Mn(2+). Residues E277, R314, 433–434 (RI), and T439 contribute to the ATP site. R314 lines the substrate pocket.

The protein belongs to the phosphoenolpyruvate carboxykinase (ATP) family. Mn(2+) serves as cofactor.

It is found in the cytoplasm. The catalysed reaction is oxaloacetate + ATP = phosphoenolpyruvate + ADP + CO2. It functions in the pathway carbohydrate biosynthesis; gluconeogenesis. In terms of biological role, involved in the gluconeogenesis. Catalyzes the conversion of oxaloacetate (OAA) to phosphoenolpyruvate (PEP) through direct phosphoryl transfer between the nucleoside triphosphate and OAA. This chain is Phosphoenolpyruvate carboxykinase (ATP), found in Fusobacterium nucleatum subsp. nucleatum (strain ATCC 25586 / DSM 15643 / BCRC 10681 / CIP 101130 / JCM 8532 / KCTC 2640 / LMG 13131 / VPI 4355).